Consider the following 339-residue polypeptide: Dihydroorotate dehydrogenase (quinone) (339 aa).

FMN-binding positions include 62 to 66 (AGMDK) and threonine 86. Lysine 66 provides a ligand contact to substrate. Position 111–115 (111–115 (NRMGF)) interacts with substrate. FMN-binding residues include asparagine 139 and asparagine 172. Asparagine 172 serves as a coordination point for substrate. The Nucleophile role is filled by serine 175. Asparagine 177 lines the substrate pocket. Residues lysine 217 and threonine 245 each coordinate FMN. 246 to 247 (NT) lines the substrate pocket. Residues glycine 268, glycine 297, and 318 to 319 (YS) contribute to the FMN site.

This sequence belongs to the dihydroorotate dehydrogenase family. Type 2 subfamily. In terms of assembly, monomer. Requires FMN as cofactor.

The protein localises to the cell membrane. It carries out the reaction (S)-dihydroorotate + a quinone = orotate + a quinol. Its pathway is pyrimidine metabolism; UMP biosynthesis via de novo pathway; orotate from (S)-dihydroorotate (quinone route): step 1/1. Functionally, catalyzes the conversion of dihydroorotate to orotate with quinone as electron acceptor. The sequence is that of Dihydroorotate dehydrogenase (quinone) from Shewanella oneidensis (strain ATCC 700550 / JCM 31522 / CIP 106686 / LMG 19005 / NCIMB 14063 / MR-1).